The following is a 635-amino-acid chain: UvrABC system protein C (635 aa).

The 78-residue stretch at 20–97 folds into the GIY-YIG domain; the sequence is ERSGVYRMFD…IKKFQPKFNI (78 aa). In terms of domain architecture, UVR spans 207–242; sequence KELQENLSKKMEELSEQMRFEEAAEIRDRIKALSYV.

This sequence belongs to the UvrC family. In terms of assembly, interacts with UvrB in an incision complex.

It localises to the cytoplasm. Functionally, the UvrABC repair system catalyzes the recognition and processing of DNA lesions. UvrC both incises the 5' and 3' sides of the lesion. The N-terminal half is responsible for the 3' incision and the C-terminal half is responsible for the 5' incision. This Rickettsia bellii (strain RML369-C) protein is UvrABC system protein C.